The primary structure comprises 133 residues: Large ribosomal subunit protein eL32y (133 aa).

The protein belongs to the eukaryotic ribosomal protein eL32 family.

The chain is Large ribosomal subunit protein eL32y (RPL32B) from Arabidopsis thaliana (Mouse-ear cress).